Here is a 563-residue protein sequence, read N- to C-terminus: Inositol-3-phosphate synthase 1-A (563 aa).

This sequence belongs to the myo-inositol 1-phosphate synthase family. NAD(+) is required as a cofactor.

It is found in the cytoplasm. The catalysed reaction is D-glucose 6-phosphate = 1D-myo-inositol 3-phosphate. Its pathway is polyol metabolism; myo-inositol biosynthesis; myo-inositol from D-glucose 6-phosphate: step 1/2. Its function is as follows. Key enzyme in myo-inositol biosynthesis pathway that catalyzes the conversion of glucose 6-phosphate to 1-myo-inositol 1-phosphate in a NAD-dependent manner. Rate-limiting enzyme in the synthesis of all inositol-containing compounds. In Xenopus laevis (African clawed frog), this protein is Inositol-3-phosphate synthase 1-A (isyna1-a).